A 210-amino-acid polypeptide reads, in one-letter code: Probable membrane protein MT1774 (210 aa).

Helical transmembrane passes span 43-63 and 165-185; these read AVVM…AAAA and ALAA…LLAL.

The protein localises to the cell membrane. This chain is Probable membrane protein MT1774, found in Mycobacterium tuberculosis (strain CDC 1551 / Oshkosh).